Consider the following 323-residue polypeptide: NADH-ubiquinone oxidoreductase chain 1 (323 aa).

Transmembrane regions (helical) follow at residues 10 to 30, 52 to 72, 84 to 104, 119 to 139, 157 to 177, 189 to 209, 245 to 265, 268 to 288, and 302 to 322; these read LLYI…GLLI, PNVV…KLVL, IIYA…WSVI, VIFI…AGWA, VSYE…AGTV, VWFI…ALAE, YANI…GIVS, ISGA…RATL, and KSLL…VLII.

The protein belongs to the complex I subunit 1 family.

It is found in the mitochondrion inner membrane. The catalysed reaction is a ubiquinone + NADH + 5 H(+)(in) = a ubiquinol + NAD(+) + 4 H(+)(out). Its function is as follows. Core subunit of the mitochondrial membrane respiratory chain NADH dehydrogenase (Complex I) that is believed to belong to the minimal assembly required for catalysis. Complex I functions in the transfer of electrons from NADH to the respiratory chain. The immediate electron acceptor for the enzyme is believed to be ubiquinone. This Dictyostelium citrinum (Slime mold) protein is NADH-ubiquinone oxidoreductase chain 1 (nad1).